Here is a 29-residue protein sequence, read N- to C-terminus: Dermaseptin-1.2TR (29 aa).

Residue Val-29 is modified to Valine amide.

In terms of tissue distribution, expressed by the skin glands.

The protein localises to the secreted. Functionally, has antimicrobial activity. The protein is Dermaseptin-1.2TR of Phyllomedusa trinitatis (Trinidad leaf frog).